A 248-amino-acid polypeptide reads, in one-letter code: MDFSGKNVWVTGAGKGIGYATALAFVEAGAKVTGFDQAFTQEQYPFATEVMDVADAAQVAQVCQRLLAETERLDALVNAAGILRMGATDQLSKEDWQQTFAVNVGGAFNLFQQTMNQFRRQRGGAIVTVASDAAHTPRIGMSAYGASKAALKSLALSVGLELAGSGVRCNVVSPGSTDTDMQRTLWVSDDAEEQRIRGFGEQFKLGIPLGKIARPQEIANTILFLASDLASHITLQDIVVDGGSTLGA.

Residue tryptophan 9 to threonine 33 coordinates NAD(+). A substrate-binding site is contributed by serine 131. The Proton acceptor role is filled by tyrosine 144.

This sequence belongs to the short-chain dehydrogenases/reductases (SDR) family. As to quaternary structure, homotetramer; dimer of dimers. EntA and EntE interact together.

The catalysed reaction is (2S,3S)-2,3-dihydroxy-2,3-dihydrobenzoate + NAD(+) = 2,3-dihydroxybenzoate + NADH + H(+). Its pathway is siderophore biosynthesis; enterobactin biosynthesis. Inhibited by cis-2-hydroxy-3-cyclohexen-1-carboxylate, cis-2-hydroxycyclohexane-1-carboxylate and trans-2-hydroxycyclohexane-1-carboxylate. Involved in the biosynthesis of the siderophore enterobactin (enterochelin), which is a macrocyclic trimeric lactone of N-(2,3-dihydroxybenzoyl)-serine. Catalyzes the reversible NAD-dependent oxidation of the C3-hydroxyl group of 2,3-dihydro-2,3-dihydroxybenzoate (2,3-diDHB), producing the transient intermediate 2-hydroxy-3-oxo-4,6-cyclohexadiene-1-carboxylate, which undergoes rapid aromatization to the final product, 2,3-dihydroxybenzoate (2,3-DHB). Only the compounds with a C3-hydroxyl group such as methyl 2,3-dihydro-2,3-dihydroxybenzoate, methyl-3-hydroxy-1,4-cyclohexadiene-1-carboxylate, trans-3-hydroxy-2-cyclohexene-1-carboxylate, cis-3-hydroxy-4-cyclohexene-1-carboxylate, cis-3-hydroxycyclohexane-1-carboxylic acid are oxidized to the corresponding ketone products. The stereospecificity of the C3 allylic alcohol group oxidation is 3R in a 1R,3R dihydro substrate. It can also increase the DHB-AMP ligase activity of EntE by interaction EntE. In Escherichia coli (strain K12), this protein is 2,3-dihydro-2,3-dihydroxybenzoate dehydrogenase.